The following is a 579-amino-acid chain: Adenine deaminase (579 aa).

This sequence belongs to the metallo-dependent hydrolases superfamily. Adenine deaminase family. Mn(2+) is required as a cofactor.

It catalyses the reaction adenine + H2O + H(+) = hypoxanthine + NH4(+). The polypeptide is Adenine deaminase (Listeria innocua serovar 6a (strain ATCC BAA-680 / CLIP 11262)).